Here is a 280-residue protein sequence, read N- to C-terminus: Ribonuclease Z (280 aa).

Zn(2+) contacts are provided by histidine 61, histidine 63, aspartate 65, histidine 66, histidine 153, aspartate 176, and histidine 240. Residue aspartate 65 is the Proton acceptor of the active site.

Belongs to the RNase Z family. As to quaternary structure, homodimer. It depends on Zn(2+) as a cofactor.

It catalyses the reaction Endonucleolytic cleavage of RNA, removing extra 3' nucleotides from tRNA precursor, generating 3' termini of tRNAs. A 3'-hydroxy group is left at the tRNA terminus and a 5'-phosphoryl group is left at the trailer molecule.. Functionally, zinc phosphodiesterase, which displays some tRNA 3'-processing endonuclease activity. Probably involved in tRNA maturation, by removing a 3'-trailer from precursor tRNA. In Mycobacterium avium (strain 104), this protein is Ribonuclease Z.